Here is a 974-residue protein sequence, read N- to C-terminus: Toxin subunit YenC1 (974 aa).

RHS repeat units lie at residues 165-179 (AGQCLRHYNSAGLNQ), 290-304 (GVLTTYSYEAETQRL), 322-336 (FQDLRYTYDPVGNVL), 354-368 (VPENTYIYDTLYQLV), 398-412 (NYIRNYHYDSAGNLM), 490-504 (SDSETYRYDANSQRV), 570-584 (NDELRYSYDNLIGSS), 596-610 (SQEEYYPYGGTAVWM), and 630-644 (DATGLYYYGFRYYQP). The segment at 600–680 (YYPYGGTAVW…PIVLHDPDGL (81 aa)) is RHS-repeat associated core domain. Residues 699–940 (ISSLKGTGPF…GEVSASTLLE (242 aa)) are cytotoxic necrotising factor domain.

Belongs to the RHS family. In terms of assembly, semipurified toxin complex consists of at least YenA1-YenA2-YenB-YenC1-YenC2-Chi1-Chi2. The Yen-TC:K9 subcomplex is about 26 nm tall and 22 nm in diameter with 5-fold symmetry and 5 copies of YenA1, YenA2, Chi1 and Chi2; the chitinase subunits may be solvent accessible on the exterior the complex. The Yen-TC:K9 subcomplex has no insecticidal activity. The native complex with additional YenB, YenC1 and YenC2 subunits is 16 nm taller and is insecticidal; the toxicity-conferring subunits are present at about 1 copy each.

The protein localises to the secreted. Toxin complex is secreted when grown at 25 degrees Celsius or less; at higher temperatures the proteins are present intracellularly but not secreted. In terms of biological role, part of an orally active toxin complex (TC) with strong insecticidal effects on larvae of the Coleoptera Costelytra zealandica, Acrossidius tasmania and Adoryphorus couloni and some Lepidoptera larvae. The TC has an endochitinase activity. In Yersinia entomophaga, this protein is Toxin subunit YenC1.